The following is a 141-amino-acid chain: Short-chain diamines transporter (141 aa).

Helical transmembrane passes span 16–36 (VILLVIIAIALSFIFDVPLEV), 39–59 (TLGIVMAVTSVFWNMIFNHFF), 76–96 (ILHAIGFEGGLMLVTIPMVAY), and 103–123 (WQAIVLDFGLTMCILVYTFIF).

This sequence belongs to the proteobacterial antimicrobial compound efflux (PACE) (TC 2.A.117) family.

The protein resides in the cell inner membrane. Its function is as follows. Mediates the efflux of short-chain diamines when energized by an electrochemical gradient. Involved in resistance to the synthetic biocide chlorhexidine, a widely used antiseptic and disinfectant in both hospital and community settings. Interacts directly with chlorhexidine and mediates its efflux via an energy-dependent mechanism. The sequence is that of Short-chain diamines transporter from Acinetobacter baylyi (strain ATCC 33305 / BD413 / ADP1).